Reading from the N-terminus, the 118-residue chain is Large ribosomal subunit protein bL20 (118 aa).

It belongs to the bacterial ribosomal protein bL20 family.

In terms of biological role, binds directly to 23S ribosomal RNA and is necessary for the in vitro assembly process of the 50S ribosomal subunit. It is not involved in the protein synthesizing functions of that subunit. In Ralstonia pickettii (strain 12J), this protein is Large ribosomal subunit protein bL20.